We begin with the raw amino-acid sequence, 2824 residues long: Highly reducing polyketide synthase stpks1 (2824 aa).

Positions 8-428 (PKPVAVVGIS…GANGHVIAES (421 aa)) constitute a Ketosynthase family 3 (KS3) domain. Residues C177, H312, and H348 each act as for beta-ketoacyl synthase activity in the active site. Positions 517 to 854 (QLVFVFSGQG…LTAVGNLSTL (338 aa)) are malonyl-CoA:ACP transacylase (MAT) domain. S616 serves as the catalytic For malonyltransferase activity. The N-terminal hotdog fold stretch occupies residues 886–1004 (MPFYSESSEL…GFMTTEVMDK (119 aa)). The 283-residue stretch at 886 to 1168 (MPFYSESSEL…SKHWTGAVPT (283 aa)) folds into the PKS/mFAS DH domain. The dehydratase (DH) domain stretch occupies residues 894–1083 (ELAVKMKRSR…PSLLDSCIHG (190 aa)). H925 (proton acceptor; for dehydratase activity) is an active-site residue. Residues 1018-1168 (TTPADISNLY…SKHWTGAVPT (151 aa)) form a C-terminal hotdog fold region. The Proton donor; for dehydratase activity role is filled by D1078. The methyltransferase (CMet) domain stretch occupies residues 1101–1449 (PSHIGRVTLY…KFQVVDGAQD (349 aa)). Residues 1213–1232 (APPSANGHANGHANGSANGS) are disordered. The tract at residues 1518–1840 (TGTFDGAVAT…LPSDFSVSQS (323 aa)) is enoyl reductase (ER) domain. The segment at 1842–2096 (ALADDKTYLV…SESVLYNHLV (255 aa)) is ketoreductase (KR) domain. Residues 2109 to 2196 (DPYEVLQEIV…TAVSTAEKPF (88 aa)) form the Carrier domain. A thioesterase (TE) domain region spans residues 2200-2414 (AMHQPGQTIL…WASSDATTRM (215 aa)). The segment at 2608–2809 (YRQNKVFTSM…ATGYSNVQVC (202 aa)) is methyltransferase (CMet) domain.

It participates in mycotoxin biosynthesis. Highly reducing polyketide synthase; part of the gene cluster that mediates the biosynthesis of strobilurin A, an antifungal polyketide that contains a key beta-methoxyacrylate toxophore that targets the complex III of the mitochondrial electron transport chain. Strobilurin biosynthesis begins with construction of benzoyl CoA by step-wise elimination of ammonia from phenylalanine by the phenylalanine ammonia-lyase str11, oxygenation by str8 and retro-Claisen reaction to form benzoic acid, which is activated to its CoA thiolester benzoyl CoA by the dedicated CoA ligase str10. Benzoyl CoA forms the starter unit for the highly reducing polyketide synthase stpks1 that produces the polyketide prestrobilutin A. The FAD-dependent oxygenase str9 then catalyzes the key oxidative rearrangement responsible for the creation of the beta-methoxyacrylate toxophore. Str9 performs epoxidation of the 2,3 olefin of prestrobilutin A, followed by Meinwald rearrangement to furnish the aldehyde intermediate. Rapid enolization of the aldehyde intermediate would give the beta-methoxyacrylate skeleton and methylations catalyzed by str2 and str3 complete the synthesis and lead to the production of strobilurin A. The short-chain dehydrogenase stl2 and the dehydrogenase str4 play a role in the shunt pathway leading to the production of bolineol. The cluster encodes no obvious halogenase gene that could be involved in production of strobilurin B, nor any obvious dimethylallyl-transferase that could be involved in the production of strobilurin G. It is possible that unknown proteins encoded in, or near, the cluster (such as str1 or stl1) may form new classes of halogenases or dimethylally-transferases, or that the responsible genes are located elsewhere on the genome. Similarly, proteins encoded by str5/str6 hydrolases appear to have no chemical role in the biosynthesis of strobilurin A. Finally, no obvious self-resistance gene is found within the cluster. This is Highly reducing polyketide synthase stpks1 from Strobilurus tenacellus.